The primary structure comprises 78 residues: Small ribosomal subunit protein bS18 (78 aa).

This sequence belongs to the bacterial ribosomal protein bS18 family. Part of the 30S ribosomal subunit. Forms a tight heterodimer with protein bS6.

Binds as a heterodimer with protein bS6 to the central domain of the 16S rRNA, where it helps stabilize the platform of the 30S subunit. The chain is Small ribosomal subunit protein bS18 from Geobacillus kaustophilus (strain HTA426).